We begin with the raw amino-acid sequence, 89 residues long: Small ribosomal subunit protein uS19 (89 aa).

Belongs to the universal ribosomal protein uS19 family.

In terms of biological role, protein S19 forms a complex with S13 that binds strongly to the 16S ribosomal RNA. The protein is Small ribosomal subunit protein uS19 of Akkermansia muciniphila (strain ATCC BAA-835 / DSM 22959 / JCM 33894 / BCRC 81048 / CCUG 64013 / CIP 107961 / Muc).